The primary structure comprises 538 residues: Spindle pole body protein CSA6 (538 aa).

2 disordered regions span residues 1 to 31 (MEDS…TSDL) and 57 to 129 (QNIS…KYQD). Composition is skewed to basic and acidic residues over residues 18–30 (PEIK…KTSD) and 57–68 (QNISDSEHDLTP). Composition is skewed to polar residues over residues 86–96 (KFSSSIPQKPT) and 104–122 (TSPT…SGPN). A coiled-coil region spans residues 144–237 (KQEQNLKLEN…RNERDELVKD (94 aa)). Basic and acidic residues predominate over residues 304–323 (KKISEPSAAVEKDTTSEDKT). Disordered regions lie at residues 304-338 (KKIS…TPRM) and 355-458 (SSNN…STKY). 2 stretches are compositionally biased toward polar residues: residues 355 to 392 (SSNN…SAAY) and 407 to 425 (TNFY…QSSQ). Basic and acidic residues predominate over residues 426–444 (SDERPETFELPHVAKDHWL). Polar residues predominate over residues 446–457 (RPTSERSTQSTK).

It localises to the cytoplasm. Its subcellular location is the cytoskeleton. It is found in the microtubule organizing center. The protein localises to the spindle pole body. Plays a role in mitotic spindle pole body organization, possibly at the point of spindle pole body separation. Required for mitotic exit. In Candida albicans (strain SC5314 / ATCC MYA-2876) (Yeast), this protein is Spindle pole body protein CSA6.